An 886-amino-acid chain; its full sequence is Vam6/Vps39-like protein (886 aa).

One can recognise a CNH domain in the interval P15–I294. The stretch at F573–S750 is one CHCR repeat.

This sequence belongs to the VAM6/VPS39 family. In terms of assembly, homooligomer. Interacts with TGFBR2 and, less efficiently, with TGFBR1; interaction with TGFBR2 is independent of the receptor kinase activity and of the presence of TGF-beta. Also interacts with ACVR2B, but not with BMPR2. Interacts with SMAD4, preferentially following TGF-beta treatment. Component of the putative homotypic fusion and vacuole protein sorting (HOPS) complex; the core of which composed of the class C Vps proteins VPS11, VPS16, VPS18 and VPS33A, is associated with VPS39 and VPS41. Interacts with PLEKHM2; involved in VPS39 recruitment to ARL8B-containing lysosomes. Associates with adapter protein complex 3 (AP-3) and clathrin:AP-3 complexes. Interacts with STX17; this interaction is increased in the absence of TMEM39A. Interacts with RAB7, RAB2A and RAB2B. Interacts with RAB2A (GTP-bound); the interaction contributes to obtaining a functional HOPS complex that promotes autophagosome-lysosome membrane fusion driven by STX17-SNAP29-VAMP8. Interacts with RAB39A (GTP-bound) and RAB39B (GTP-bound); interaction with RAB39A contributes to obtaining a functional HOPS complex.

Its subcellular location is the cytoplasm. It is found in the lysosome membrane. It localises to the late endosome membrane. Its function is as follows. Regulator of TGF-beta/activin signaling, inhibiting SMAD3- and activating SMAD2-dependent transcription. Acts by interfering with SMAD3/SMAD4 complex formation, this would lead to inhibition of SMAD3-dependent transcription and relieve SMAD3 inhibition of SMAD2-dependent promoters, thus increasing SMAD2-dependent transcription. Functionally, plays a role in vesicle-mediated protein trafficking to lysosomal compartments including the endocytic membrane transport and autophagic pathways. Acts as a component of the HOPS endosomal tethering complex which is proposed to be involved in the Rab5-to-Rab7 endosome conversion probably implicating MON1A/B, and via binding SNAREs and SNARE complexes to mediate tethering and docking events during SNARE-mediated membrane fusion. The HOPS complex is proposed to be recruited to Rab7 on the late endosomal membrane and to regulate late endocytic, phagocytic and autophagic traffic towards lysosomes. Involved in homotypic vesicle fusions between late endosomes and in heterotypic fusions between late endosomes and lysosomes. Required for fusion of endosomes and autophagosomes with lysosomes. This Mus musculus (Mouse) protein is Vam6/Vps39-like protein.